A 428-amino-acid polypeptide reads, in one-letter code: S-adenosylmethionine synthase (428 aa).

An ATP-binding site is contributed by His14. A Mg(2+)-binding site is contributed by Asp16. Glu42 contributes to the K(+) binding site. L-methionine is bound by residues Glu55 and Gln98. The flexible loop stretch occupies residues 98–108; sequence QSGDINRGVER. ATP contacts are provided by residues 165–167, 251–252, Asp260, 266–267, Ala283, and Lys287; these read DAK, KF, and RK. Residue Asp260 coordinates L-methionine. Lys291 is a binding site for L-methionine.

The protein belongs to the AdoMet synthase family. As to quaternary structure, homotetramer; dimer of dimers. Mg(2+) serves as cofactor. The cofactor is K(+).

The protein localises to the cytoplasm. The catalysed reaction is L-methionine + ATP + H2O = S-adenosyl-L-methionine + phosphate + diphosphate. It functions in the pathway amino-acid biosynthesis; S-adenosyl-L-methionine biosynthesis; S-adenosyl-L-methionine from L-methionine: step 1/1. Its function is as follows. Catalyzes the formation of S-adenosylmethionine (AdoMet) from methionine and ATP. The overall synthetic reaction is composed of two sequential steps, AdoMet formation and the subsequent tripolyphosphate hydrolysis which occurs prior to release of AdoMet from the enzyme. The polypeptide is S-adenosylmethionine synthase (Parabacteroides distasonis (strain ATCC 8503 / DSM 20701 / CIP 104284 / JCM 5825 / NCTC 11152)).